The primary structure comprises 676 residues: Mediator of RNA polymerase II transcription subunit 17 (676 aa).

Disordered regions lie at residues Ile-27–Asn-68 and Ile-117–Thr-176. Residues Ser-29–Ser-40 are compositionally biased toward low complexity. Composition is skewed to basic and acidic residues over residues His-47–Asn-56 and Asp-120–Asp-134. Residues Gly-135–Asp-145 are compositionally biased toward acidic residues. The segment covering Asn-146–Ser-160 has biased composition (polar residues).

It belongs to the Mediator complex subunit 17 family. In terms of assembly, component of the Mediator complex.

It is found in the nucleus. Its function is as follows. Component of the Mediator complex, a coactivator involved in the regulated transcription of nearly all RNA polymerase II-dependent genes. Mediator functions as a bridge to convey information from gene-specific regulatory proteins to the basal RNA polymerase II transcription machinery. Mediator is recruited to promoters by direct interactions with regulatory proteins and serves as a scaffold for the assembly of a functional preinitiation complex with RNA polymerase II and the general transcription factors. This is Mediator of RNA polymerase II transcription subunit 17 (SRB4) from Candida glabrata (strain ATCC 2001 / BCRC 20586 / JCM 3761 / NBRC 0622 / NRRL Y-65 / CBS 138) (Yeast).